A 271-amino-acid polypeptide reads, in one-letter code: Short-chain dehydrogenase ptmH (271 aa).

I8, T34, K40, D56, N84, Y148, K152, V181, and T183 together coordinate NADP(+). Y148 serves as the catalytic Proton acceptor. Catalysis depends on K152, which acts as the Lowers pKa of active site Tyr.

It belongs to the short-chain dehydrogenases/reductases (SDR) family.

It participates in secondary metabolite biosynthesis. Its function is as follows. Short-chain dehydrogenase; part of the gene cluster that mediates the biosynthesis of the indole diterpenes penitrems. The geranylgeranyl diphosphate (GGPP) synthase ptmG catalyzes the first step in penitrem biosynthesis via conversion of farnesyl pyrophosphate and isopentyl pyrophosphate into geranylgeranyl pyrophosphate (GGPP). Condensation of indole-3-glycerol phosphate with GGPP by the prenyl transferase ptmC then forms 3-geranylgeranylindole (3-GGI). Epoxidation by the FAD-dependent monooxygenase ptmM leads to a epoxidized-GGI that is substrate of the terpene cyclase ptmB for cyclization to yield paspaline. Paspaline is subsequently converted to 13-desoxypaxilline by the cytochrome P450 monooxygenase ptmP, the latter being then converted to paxilline by the cytochrome P450 monooxygenase ptmQ. Paxilline is converted to beta-paxitriol via C-10 ketoreduction by the short-chain dehydrogenase ptmH which can be monoprenylated at the C-20 by the indole diterpene prenyltransferase ptmD. A two-step elimination (acetylation and elimination) process performed by the O-acetyltransferase ptmV and ptmI leads to the production of the prenylated form of penijanthine. The FAD-linked oxidoreductase ptmO then converts the prenylated form of penijanthine into PC-M5 which is in turn transformed into PC-M4 by the aromatic dimethylallyltransferase ptmE. Five sequential oxidative transformations performed by the cytochrome P450 monooxygenases ptmK, ptmU, ptmL, ptmN and ptmJ yield the various penitrem compounds. PtmK, ptmU and ptmM are involved in the formation of the key bicyclic ring of penitrem C via the formation of the intermediates secopenitrem D and penitrem D. PtmL catalyzes the epoxidation of penitrem D and C to yield penitrem B and F, respectively. PtmJ catalyzes the last benzylic hydroxylation to convert penitrem B to prenitrem E and penitrem F to penitrem A. The polypeptide is Short-chain dehydrogenase ptmH (Penicillium ochrochloron).